Consider the following 974-residue polypeptide: Serine/threonine-protein kinase 10 (974 aa).

One can recognise a Protein kinase domain in the interval 37-295 (WEIIGELGDG…AAQLLEHPFV (259 aa)). ATP is bound by residues 43-51 (LGDGAFGKV) and lysine 66. The Proton acceptor role is filled by aspartate 158. The span at 320-332 (EDNHEDGEDEDPA) shows a compositional bias: acidic residues. Positions 320-479 (EDNHEDGEDE…EKEDHCEETQ (160 aa)) are disordered. A compositionally biased stretch (polar residues) spans 343–353 (DPSQTSATSLN). Basic and acidic residues-rich tracts occupy residues 382 to 406 (PLKE…ESEA) and 458 to 477 (TMEK…HCEE). 2 coiled-coil regions span residues 605 to 729 (QKEQ…EEQK) and 870 to 950 (EKVK…EHLK).

The protein belongs to the protein kinase superfamily. STE Ser/Thr protein kinase family. STE20 subfamily. As to quaternary structure, homodimer. Post-translationally, autophosphorylates.

It localises to the cell membrane. It carries out the reaction L-seryl-[protein] + ATP = O-phospho-L-seryl-[protein] + ADP + H(+). It catalyses the reaction L-threonyl-[protein] + ATP = O-phospho-L-threonyl-[protein] + ADP + H(+). Its function is as follows. May act as a polo kinase kinase by mediating phosphorylation of plk1. In Danio rerio (Zebrafish), this protein is Serine/threonine-protein kinase 10 (stk10).